Consider the following 207-residue polypeptide: MRRGDPAPRWPGAVLPRAFFDRVATDVAPQLLNKILAAADGRAGRIVEVEAYAGAIDPAAHTYRGKTPRNATMFGPPGHLYVYFTYGMHWCCNCVCGPDGTGTGVLIRALEPLQGLERMRAARPPQTRDRDLCRGPARLTQAMGIGGAQDGVDLIGAHEGFAIVDDGSAPPADLAGGPRIGIRVGTDLPWRWSVPGNRYVSGPVTRR.

Belongs to the DNA glycosylase MPG family.

The sequence is that of Putative 3-methyladenine DNA glycosylase from Burkholderia lata (strain ATCC 17760 / DSM 23089 / LMG 22485 / NCIMB 9086 / R18194 / 383).